Here is a 365-residue protein sequence, read N- to C-terminus: tRNA/tmRNA (uracil-C(5))-methyltransferase (365 aa).

The S-adenosyl-L-methionine site is built by glutamine 189, tyrosine 217, asparagine 222, glutamate 238, and aspartate 298. Cysteine 323 functions as the Nucleophile in the catalytic mechanism. Glutamate 357 (proton acceptor) is an active-site residue.

The protein belongs to the class I-like SAM-binding methyltransferase superfamily. RNA M5U methyltransferase family. TrmA subfamily.

It catalyses the reaction uridine(54) in tRNA + S-adenosyl-L-methionine = 5-methyluridine(54) in tRNA + S-adenosyl-L-homocysteine + H(+). It carries out the reaction uridine(341) in tmRNA + S-adenosyl-L-methionine = 5-methyluridine(341) in tmRNA + S-adenosyl-L-homocysteine + H(+). In terms of biological role, dual-specificity methyltransferase that catalyzes the formation of 5-methyluridine at position 54 (m5U54) in all tRNAs, and that of position 341 (m5U341) in tmRNA (transfer-mRNA). The protein is tRNA/tmRNA (uracil-C(5))-methyltransferase of Pasteurella multocida (strain Pm70).